The chain runs to 205 residues: Retron Vc95 putative HNH endonuclease (205 aa).

Its function is as follows. Putative HNH endonuclease component of antiviral defense system retron Vc95, composed of a non-coding RNA (ncRNA), a reverse transcriptase (RT), a probable ATP-binding protein and this protein. Expression of retron Vc95 confers protection against bacteriophages T2, T4 and T6. At multiplicity of infection (MOI) of 0.02 cultures slow growth when infected with T4 but do not collapse, at MOI 2 cultures enter growth stasis. The chain is Retron Vc95 putative HNH endonuclease from Vibrio cholerae serotype O1 biovar El Tor.